The primary structure comprises 909 residues: UPF0182 protein Moth_1139 (909 aa).

The next 7 helical transmembrane spans lie at 8–28, 51–71, 103–123, 165–185, 201–221, 245–265, and 277–297; these read FCLL…SHFL, VGIR…NLLF, LGIL…PLAA, LLIT…FIFN, LVHF…GFRL, LLPG…IIVL, and AGIL…PLAV. Positions 843–862 are disordered; it reads PAPAASPQPPSQAATGSPGN.

It belongs to the UPF0182 family.

It localises to the cell membrane. In Moorella thermoacetica (strain ATCC 39073 / JCM 9320), this protein is UPF0182 protein Moth_1139.